The chain runs to 347 residues: Indole-3-glycerol phosphate lyase, chloroplastic (347 aa).

Disordered stretches follow at residues 1–38 (MAFAPKTSSSSSLSSALQAAQSPPLLLRRMSSTATPRR) and 64–89 (APPQAPAPAPVPPKQAAAPAERRSRP). The transit peptide at 1 to 53 (MAFAPKTSSSSSLSSALQAAQSPPLLLRRMSSTATPRRRYDAAVVVTTTTTAR) directs the protein to the chloroplast. The segment covering 8 to 27 (SSSSSLSSALQAAQSPPLLL) has biased composition (low complexity). Over residues 64–76 (APPQAPAPAPVPP) the composition is skewed to pro residues.

Belongs to the TrpA family. Tetramer of two alpha and two beta chains for the tryptophan synthase activity. Homodimer of alpha chains for the indole-3-glycerol phosphate lyase activity.

Its subcellular location is the plastid. It is found in the chloroplast. It carries out the reaction (1S,2R)-1-C-(indol-3-yl)glycerol 3-phosphate = indole + D-glyceraldehyde 3-phosphate. It catalyses the reaction (1S,2R)-1-C-(indol-3-yl)glycerol 3-phosphate + L-serine = D-glyceraldehyde 3-phosphate + L-tryptophan + H2O. It participates in secondary metabolite biosynthesis; 2,4-dihydroxy-1,4-benzoxazin-3-one biosynthesis; 2,4-dihydroxy-1,4-benzoxazin-3-one from indoleglycerol phosphate: step 1/5. Its pathway is amino-acid biosynthesis; L-tryptophan biosynthesis; L-tryptophan from chorismate: step 5/5. In terms of biological role, the alpha subunit is responsible for the aldol cleavage of indoleglycerol phosphate to indole and glyceraldehyde 3-phosphate. In bacteria, tryptophan synthase alpha (TSA) activity is almost completely dependent on formation of an active alpha2beta2 complex with tryptophan synthase beta (TSB), and indole is usually not released during tryptophan synthesis. In maize, the TSA homolog BX1 catalyzes the formation of free indole from indole-3-glycerol phosphate, independently of TSB. This is Indole-3-glycerol phosphate lyase, chloroplastic (BX1) from Zea mays (Maize).